Reading from the N-terminus, the 387-residue chain is O-methyltransferase asqD (387 aa).

Asp-252 provides a ligand contact to S-adenosyl-L-methionine. His-294 acts as the Proton acceptor in catalysis.

The protein belongs to the class I-like SAM-binding methyltransferase superfamily. Cation-independent O-methyltransferase family.

It functions in the pathway secondary metabolite biosynthesis. The protein operates within alkaloid biosynthesis. It participates in mycotoxin biosynthesis. O-methyltransferase; part of the gene cluster that mediates the biosynthesis of the aspoquinolone mycotoxins. The role of asqD within the aspoquinolone pathway has still to be determined. The first step of the pathway is catalyzed by the nonribosomal peptide synthetase asqK that condenses anthranilic acid and O-methyl-L-tyrosine to produce 4'-methoxycyclopeptin. 4'-methoxycyclopeptin is then converted to 4'-methoxydehydrocyclopeptin by the ketoglutarate-dependent dioxygenase asqJ. AsqJ also converts its first product 4'-methoxydehydrocyclopeptin to 4'-methoxycyclopenin. The following conversion of 4'-methoxycyclopenin into 4'-methoxyviridicatin is catalyzed by the cyclopenase asqI. 4'-methoxyviridicatin is the precursor of quinolone natural products, and is further converted to quinolinone B. The prenyltransferase asqH1 then catalyzes the canonical Friedel-Crafts alkylation of quinolinone B with dimethylallyl cation to yield dimethylallyl quinolone, which is subjected to FAD-dependent dehydrogenation by the FAD-linked oxidoreductase asqF to yield conjugated aryl diene. The delta(3') double bond then serves as the site of the second alkylation with DMAPP catalyzed by the prenyltransferase asqH2 to yield a carbenium ion intermediate, which can be attacked by H(2)O to yield a styrenyl quinolone containing a C3'-hydroxyprenyl chain. The FAD-dependent monooxygenase asqG performs epoxidation of the terminal C7'-C8' olefin. Finally, after dehydratation of the epoxide at C3 by asqC, the quinolone epoxide rearrangement protein asqO catalyzes an enzymatic 3-exo-tet cyclization to yield the cyclopropyl-THF ring system in aspoquinolone. The polypeptide is O-methyltransferase asqD (Emericella nidulans (strain FGSC A4 / ATCC 38163 / CBS 112.46 / NRRL 194 / M139) (Aspergillus nidulans)).